A 294-amino-acid chain; its full sequence is Nucleotide-binding protein LCA_0526 (294 aa).

Residue 12–19 (GMSGAGKT) coordinates ATP. A GTP-binding site is contributed by 62 to 65 (DLRS).

The protein belongs to the RapZ-like family.

Its function is as follows. Displays ATPase and GTPase activities. The polypeptide is Nucleotide-binding protein LCA_0526 (Latilactobacillus sakei subsp. sakei (strain 23K) (Lactobacillus sakei subsp. sakei)).